We begin with the raw amino-acid sequence, 475 residues long: ESX-3 secretion system protein EccD3 (475 aa).

11 helical membrane passes run 132 to 152 (IARGAALALIGLILVGTGLSV), 161 to 181 (LLGQFIVSGIALATVIAALAV), 186 to 206 (AVLATSLAVTALVPVAAAFAL), 212 to 232 (FGAPNVLLAAAGVAAWSLISM), 241 to 261 (IAVFTATAVTGVGVLLVAGAA), 264 to 284 (WVISSDVIGCALVLLGLIVTV), 333 to 353 (GVIAAGVLLGVAGSVALVSSA), 354 to 374 (NASPWAWYIVVAAAAGAALRA), 384 to 404 (AWLLGHSYLLAVALLVAFVIG), 409 to 429 (AALWALAALAVLVLVWIVAAL), and 453 to 473 (GLDASLIPVMALLVGLFSLVL).

It belongs to the EccD/Snm4 family. In terms of assembly, part of the ESX-3 / type VII secretion system (T7SS), which is composed of cytosolic and membrane components. The ESX-3 membrane complex is composed of EccB3, EccC3, EccD3 and EccE3.

It localises to the cell inner membrane. Part of the ESX-3 specialized secretion system, which is required for siderophore-mediated iron acquisition and for the secretion of EsxH and EsxG. The chain is ESX-3 secretion system protein EccD3 from Mycolicibacterium smegmatis (strain ATCC 700084 / mc(2)155) (Mycobacterium smegmatis).